The chain runs to 483 residues: Regulatory protein ViaA (483 aa).

The protein belongs to the ViaA family. In terms of assembly, homodimer. Interacts with RavA.

It localises to the cytoplasm. Functionally, component of the RavA-ViaA chaperone complex, which may act on the membrane to optimize the function of some of the respiratory chains. ViaA stimulates the ATPase activity of RavA. In Shigella flexneri serotype 5b (strain 8401), this protein is Regulatory protein ViaA.